The following is a 446-amino-acid chain: Putative diacyglycerol O-acyltransferase Rv3371 (446 aa).

The active-site Proton acceptor is the H129. Residues 425–446 form a disordered region; sequence SRALPSAARRGRPSVPTARARH.

This sequence belongs to the long-chain O-acyltransferase family.

The catalysed reaction is an acyl-CoA + a 1,2-diacyl-sn-glycerol = a triacyl-sn-glycerol + CoA. It catalyses the reaction di-(9Z)-octadecenoylglycerol + (9Z)-octadecenoyl-CoA = 1,2,3-tri-(9Z-octadecenoyl)-glycerol + CoA. It participates in glycerolipid metabolism; triacylglycerol biosynthesis. Its function is as follows. Catalyzes the terminal and only committed step in triacylglycerol synthesis by using diacylglycerol and fatty acyl CoA as substrates. Required for storage lipid synthesis. Functionally, upon expression in E.coli functions weakly as a triacylglycerol synthase, making triacylglycerol (TG) from diolein and long-chain fatty acyl-CoA. Has no wax synthase activity to produce wax esters. The protein is Putative diacyglycerol O-acyltransferase Rv3371 of Mycobacterium tuberculosis (strain ATCC 25618 / H37Rv).